We begin with the raw amino-acid sequence, 139 residues long: Large ribosomal subunit protein uL22 (139 aa).

Residues 1 to 21 (MTAPTPEFRNKKQRKQQVKLR) are disordered.

It belongs to the universal ribosomal protein uL22 family. Part of the 50S ribosomal subunit.

This protein binds specifically to 23S rRNA; its binding is stimulated by other ribosomal proteins, e.g. L4, L17, and L20. It is important during the early stages of 50S assembly. It makes multiple contacts with different domains of the 23S rRNA in the assembled 50S subunit and ribosome. Functionally, the globular domain of the protein is located near the polypeptide exit tunnel on the outside of the subunit, while an extended beta-hairpin is found that lines the wall of the exit tunnel in the center of the 70S ribosome. The sequence is that of Large ribosomal subunit protein uL22 from Deinococcus deserti (strain DSM 17065 / CIP 109153 / LMG 22923 / VCD115).